Here is a 115-residue protein sequence, read N- to C-terminus: UPF0125 protein VP0646 (115 aa).

Residues 92–115 form a disordered region; the sequence is RAEQAKAAGNADPVTGGKPNALRK.

This sequence belongs to the UPF0125 (RnfH) family.

The protein is UPF0125 protein VP0646 of Vibrio parahaemolyticus serotype O3:K6 (strain RIMD 2210633).